Here is a 205-residue protein sequence, read N- to C-terminus: Thymidylate kinase (205 aa).

Residue 9 to 16 (GPEGSGKT) participates in ATP binding.

Belongs to the thymidylate kinase family.

It catalyses the reaction dTMP + ATP = dTDP + ADP. Its function is as follows. Phosphorylation of dTMP to form dTDP in both de novo and salvage pathways of dTTP synthesis. The polypeptide is Thymidylate kinase (Staphylococcus aureus (strain NCTC 8325 / PS 47)).